A 438-amino-acid chain; its full sequence is 23S rRNA (uracil(1939)-C(5))-methyltransferase RlmD (438 aa).

Positions 4-68 constitute a TRAM domain; that stretch reads FYTPGRRTAT…RHFARGRVTR (65 aa). [4Fe-4S] cluster-binding residues include cysteine 81, cysteine 87, cysteine 90, and cysteine 167. S-adenosyl-L-methionine is bound by residues glutamine 269, phenylalanine 298, asparagine 303, glutamate 319, asparagine 346, and aspartate 367. The active-site Nucleophile is the cysteine 393.

Belongs to the class I-like SAM-binding methyltransferase superfamily. RNA M5U methyltransferase family. RlmD subfamily.

It catalyses the reaction uridine(1939) in 23S rRNA + S-adenosyl-L-methionine = 5-methyluridine(1939) in 23S rRNA + S-adenosyl-L-homocysteine + H(+). In terms of biological role, catalyzes the formation of 5-methyl-uridine at position 1939 (m5U1939) in 23S rRNA. This Edwardsiella ictaluri (strain 93-146) protein is 23S rRNA (uracil(1939)-C(5))-methyltransferase RlmD.